The primary structure comprises 406 residues: Interactor protein for cytohesin exchange factors 1 (406 aa).

A PH domain is found at 13 to 112 (HADCQGWLYK…WLNKLGFAVT (100 aa)). Disordered regions lie at residues 118–173 (TKDE…FSSL), 228–285 (CRVS…EDDE), and 383–406 (PQDP…ENSL). The span at 123–134 (CYSESEQEDPET) shows a compositional bias: acidic residues. Low complexity predominate over residues 144-160 (ASATSSPVAARRASSSS). Positions 228–239 (CRVSENSSTTPE) are enriched in polar residues. Positions 243–259 (LNSLSSDDTSSLNNSQD) are enriched in low complexity. Over residues 272-285 (MTDRDEIKSSEDDE) the composition is skewed to basic and acidic residues. The necessary for interaction with PSCD2 and to translocate to the plasma membrane stretch occupies residues 285–406 (EMEKLYKSLE…TSSDCVENSL (122 aa)). Positions 392–406 (EIMNPTSSDCVENSL) are enriched in polar residues.

In terms of assembly, interacts with guanine-nucleotide exchange factors PSCD1, PSCD2, PSCD3 and PSCD4. In terms of tissue distribution, expressed in brain, spleen, lung, testis and kidney.

The protein resides in the cytoplasm. The protein localises to the cell membrane. Functionally, enhances the promotion of guanine-nucleotide exchange by PSCD2 on ARF6 in a concentration-dependent manner. The polypeptide is Interactor protein for cytohesin exchange factors 1 (Ipcef1) (Rattus norvegicus (Rat)).